The following is a 209-amino-acid chain: Glutathione S-transferase 1, isoform C (209 aa).

Residues methionine 1–aspartate 80 form the GST N-terminal domain. Glutathione-binding positions include serine 9, histidine 50–isoleucine 52, and glutamate 64–arginine 66. The 122-residue stretch at aspartate 86 to phenylalanine 207 folds into the GST C-terminal domain.

The protein belongs to the GST superfamily. Theta family. As to quaternary structure, homodimer.

It carries out the reaction RX + glutathione = an S-substituted glutathione + a halide anion + H(+). The catalysed reaction is 1,1,1-trichloro-2,2-bis(4-chlorophenyl)ethane = 1,1-dichloro-2,2-bis(4-chlorophenyl)ethylene + chloride + H(+). Conjugation of reduced glutathione to a wide number of exogenous and endogenous hydrophobic electrophiles. Has DDT dehydrochlorinase activity. The protein is Glutathione S-transferase 1, isoform C (GstD1) of Anopheles gambiae (African malaria mosquito).